Here is a 444-residue protein sequence, read N- to C-terminus: uncharacterized protein (444 aa).

12 helical membrane passes run 2–22 (PILI…KVKL), 24–44 (TFVS…MDIN), 52–72 (TGIG…AMLG), 106–126 (FIIG…PIVY), 134–154 (MPFL…HGFL), 174–194 (VLLF…PLFN), 228–248 (FAIS…ATIF), 261–281 (IIEF…LALY), 305–325 (IAMM…LIDG), 343–363 (LFVA…ATVA), 377–397 (AGSV…VIAC), and 424–444 (LLTT…GLVM).

It belongs to the GntP permease family.

It localises to the cell membrane. This is an uncharacterized protein from Bacillus subtilis (strain 168).